Here is a 306-residue protein sequence, read N- to C-terminus: Ribosomal protein L11 methyltransferase (306 aa).

S-adenosyl-L-methionine is bound by residues Thr154, Gly179, Asp201, and Asn242.

The protein belongs to the methyltransferase superfamily. PrmA family.

The protein localises to the cytoplasm. The enzyme catalyses L-lysyl-[protein] + 3 S-adenosyl-L-methionine = N(6),N(6),N(6)-trimethyl-L-lysyl-[protein] + 3 S-adenosyl-L-homocysteine + 3 H(+). Its function is as follows. Methylates ribosomal protein L11. This Xanthomonas axonopodis pv. citri (strain 306) protein is Ribosomal protein L11 methyltransferase.